Reading from the N-terminus, the 429-residue chain is Inner membrane transport protein RhmT (429 aa).

Residues 1-16 are Cytoplasmic-facing; sequence MSTALLDAVVKKNRVR. The helical transmembrane segment at 17 to 37 threads the bilayer; it reads LIPFMLALYVLAFLDRSNIGF. Topologically, residues 38–54 are periplasmic; sequence AKQTYQIDTGLSNEAYA. Residues 55–75 form a helical membrane-spanning segment; it reads LGAGIFFVVYAFLGVPANLLM. Over 76 to 81 the chain is Cytoplasmic; it reads RKLGAR. Residues 82 to 102 form a helical membrane-spanning segment; that stretch reads TWIGTTTLLWGFLSAAMAWAD. Topologically, residues 103–143 are periplasmic; sequence TEAKFLIVRTLLRAAEAGFFPGMIYLTSQWFPQRNRASIMG. A helical transmembrane segment spans residues 144–164; that stretch reads LFYMGAPLALTLGSPLSGALL. The Cytoplasmic portion of the chain corresponds to 165–174; sequence EMHGFMGHPG. The chain crosses the membrane as a helical span at residues 175–195; the sequence is WFWMFVIEGLLAVGAGVFTFF. At 196–242 the chain is on the periplasmic side; that stretch reads WLDDTPEQARFLSKQEKTLLINQLASEEQQKVTSRLSDALRNGRVWQ. The helical transmembrane segment at 243–263 threads the bilayer; that stretch reads LAIIYLTIQVAVYGLIFFLPT. Topologically, residues 264-274 are cytoplasmic; sequence QVAALLGTKVG. The helical transmembrane segment at 275–295 threads the bilayer; the sequence is FTASVVTAIPWVAALFGTWLI. The Periplasmic portion of the chain corresponds to 296 to 324; the sequence is PRYSDKTGERRNVAALTLLAAGIGIGLSG. A helical transmembrane segment spans residues 325-345; the sequence is LLSPVMAIVALCVAAIGFIAV. The Cytoplasmic segment spans residues 346–361; the sequence is QPVFWTMPTQLLSGTA. The chain crosses the membrane as a helical span at residues 362–382; the sequence is LAAGIGFVNLFGAVGGFIAPI. Residues 383–394 lie on the Periplasmic side of the membrane; that stretch reads LRVKAETLFASD. Residues 395–415 form a helical membrane-spanning segment; sequence AAGLLTLAAVAVIGSLIIFTL. Residues 416-429 are Cytoplasmic-facing; that stretch reads RVNRTVAQTDVAHH.

Belongs to the major facilitator superfamily. Phthalate permease family.

The protein resides in the cell inner membrane. The sequence is that of Inner membrane transport protein RhmT (rhmT) from Escherichia coli (strain K12).